A 430-amino-acid chain; its full sequence is Trigger factor (430 aa).

Positions 165 to 250 constitute a PPIase FKBP-type domain; that stretch reads TDIAIFDFEG…LHQIKTKKIP (86 aa).

This sequence belongs to the FKBP-type PPIase family. Tig subfamily.

Its subcellular location is the cytoplasm. It carries out the reaction [protein]-peptidylproline (omega=180) = [protein]-peptidylproline (omega=0). Its function is as follows. Involved in protein export. Acts as a chaperone by maintaining the newly synthesized protein in an open conformation. Functions as a peptidyl-prolyl cis-trans isomerase. In Onion yellows phytoplasma (strain OY-M), this protein is Trigger factor.